The chain runs to 671 residues: Solute carrier family 53 member 1 (671 aa).

The segment at 1–193 (MKFAEHLTAH…DIDRLIQETE (193 aa)) is important for promoting lysosomal/autophagosomal degradation of PXo bodies following inorganic phosphate (Pi) starvation. Residues 1–228 (MKFAEHLTAH…EQQSPWTTFK (228 aa)) are Cytoplasmic-facing. The region spanning 2–218 (KFAEHLTAHI…MKRLRVPPLG (217 aa)) is the SPX domain. The segment at 152 to 159 (KILKKHDK) is important for inositol polyphosphate binding. The chain crosses the membrane as a helical span at residues 229 to 253 (VGLFSGAFVVLFITVVIAAMFYGFG). The Extracellular segment spans residues 254–255 (EN). Residues 256–287 (WRAGMRMFRAPFLIIECLFLWGVNVYGWRSSG) form a helical membrane-spanning segment. The Cytoplasmic segment spans residues 288 to 300 (VNHVLIFELDPRN). The chain crosses the membrane as a helical span at residues 301–328 (HLSEQNIMEVASVFGVIWACCVLSYIFC). The Extracellular segment spans residues 329 to 334 (DPLGIP). The chain crosses the membrane as a helical span at residues 335 to 356 (QYAAPLCLYTLMAAFLLNPTKT). Positions 357–374 (FHHEARFWAIRILIRVIM) form an intramembrane region, helical. At 375–379 (APFCF) the chain is on the cytoplasmic side. A discontinuously helical membrane pass occupies residues 380–413 (VNFADFWLADQLNSMVPAFLDIPFLICFFGRSPT). Phosphate contacts are provided by Asp389 and Asn392. At 414–415 (WH) the chain is on the extracellular side. A discontinuously helical transmembrane segment spans residues 416 to 455 (KAGKAASHCVEYVSLLHPIVAIMPAYFRFAQCIRRYRDTK). The EXS domain occupies 423–627 (HCVEYVSLLH…DCSDQTTILR (205 aa)). Glu456 is a topological domain (cytoplasmic). Residues 457-488 (SFPHLVNAAKYATSFFVVIFAHKYHTTTDTYP) traverse the membrane as a helical segment. The phosphate site is built by Lys466 and Tyr467. The Extracellular segment spans residues 489 to 491 (LSK). Residues 492-519 (ENPWFYCWITAAIFSSCYAYTWDIKMDW) form a helical membrane-spanning segment. The Cytoplasmic portion of the chain corresponds to 520–538 (GLFDSKAGDNRFLREEIVY). Residues 539-570 (SSTWFYYFGIIEDLILRFSWTLSMSLIEAGYI) traverse the membrane as a discontinuously helical segment. 3 residues coordinate phosphate: Arg555, Arg586, and Arg587. A helical transmembrane segment spans residues 571–609 (EGDVMMTILSPLEVFRRFIWNYFRLENEHLNNVGKFRAV). Topologically, residues 610-671 (RDISVAPMDC…QGESIEDLCS (62 aa)) are cytoplasmic.

This sequence belongs to the SYG1 (TC 2.A.94) family. Homodimer. Interacts with the FAR/SIN/STRIPAK complex members Cka and Pp2A-29B. As to expression, detected in PXo bodies found in the enterocytes and progenitors of the midgut and in the hindgut, but rarely occur in the Malpighian tubules, crop, brain, muscles and germlines (at protein level).

It localises to the membrane. The enzyme catalyses phosphate(in) = phosphate(out). Inorganic ion transporter that mediates phosphate ion export across the cell membrane. Plays a major role in phosphate homeostasis, preventing intracellular phosphate accumulation and possible calcium phosphate precipitation, ultimately preserving calcium signaling. Binds inositol hexakisphosphate (Ins6P) and similar inositol polyphosphates, such as 5-diphospho-inositol pentakisphosphate (5-InsP7), which are important intracellular signaling molecules involved in regulation of phosphate flux. In enterocytes and differentiating progenitors of the gut, promotes the biogenesis and maintenance of organelles called PXo bodies that store intracellular inorganic phosphate (Pi), and also regulates Cka-JNK mediated tissue homeostasis in response to Pi availability in these tissues. Under conditions of adequate Pi, transports Pi into PXo bodies which convert and store the Pi in the form of phospholipids. It also inhibits Cka at the post-transcriptional level to prevent Cka-bsk/JNK mediated cell proliferation. Upon Pi starvation, Pxo expression is down-regulated resulting in the PXo bodies decreasing in phospholipid content until they undergo lysosomal/autophagosomal degradation and release the stored Pi back into the cytosol for use by the cell. Decrease in Pxo expression also activates the Cka protein, which moves to the nucleus to activate bsk/JNK which then induces nearby progenitor cells to proliferate and form new absorptive cells, probably helping the organism to cope with the nutrient deficiency by maximizing absorption of dietary Pi. The protein is Solute carrier family 53 member 1 of Drosophila melanogaster (Fruit fly).